We begin with the raw amino-acid sequence, 594 residues long: Cryptochrome-2 (594 aa).

Positions A21–L150 constitute a Photolyase/cryptochrome alpha/beta domain. A Glycyl lysine isopeptide (Lys-Gly) (interchain with G-Cter in ubiquitin) cross-link involves residue K29. A Phosphoserine modification is found at S89. Residues K125 and K241 each participate in a glycyl lysine isopeptide (Lys-Gly) (interchain with G-Cter in ubiquitin) cross-link. The residue at position 265 (S265) is a Phosphoserine; by MAPK. Residue S270 participates in FAD binding. The residue at position 298 (S298) is a Phosphoserine. Q307 provides a ligand contact to FAD. K347 participates in a covalent cross-link: Glycyl lysine isopeptide (Lys-Gly) (interchain with G-Cter in ubiquitin). FAD-binding positions include H373 and D405–D407. The interval W389 to I488 is required for inhibition of CLOCK-BMAL1-mediated transcription. Residues K474 and K503 each participate in a glycyl lysine isopeptide (Lys-Gly) (interchain with G-Cter in ubiquitin) cross-link. Residues V532–S594 are disordered. Over residues G536–G547 the composition is skewed to polar residues. S553 carries the phosphoserine; by GSK3-beta modification. S557 bears the Phosphoserine; by DYRK1A and MAPK mark.

Belongs to the DNA photolyase class-1 family. In terms of assembly, component of the circadian core oscillator, which includes the CRY proteins, CLOCK or NPAS2, BMAL1 or BMAL2, CSNK1D and/or CSNK1E, TIMELESS, and the PER proteins. Interacts with TIMELESS. Interacts directly with PER1, PER2 and PER3; interaction with PER2 inhibits its ubiquitination and vice versa. Interacts with CLOCK-BMAL1. Interacts with CLOCK. Interacts with BMAL1. Interacts with NFIL3. Interacts with FBXL3 and FBXL21. FBXL3, PER2 and the cofactor FAD compete for overlapping binding sites. FBXL3 cannot bind CRY2 that interacts already with PER2 or that contains bound FAD. Interacts with PPP5C (via TPR repeats); the interaction down-regulates the PPP5C phosphatase activity on CSNK1E. Interacts with nuclear receptors AR and NR3C1/GR; the interaction is ligand dependent. Interacts with PRKDC and CIART. Interacts with DDB1, USP7 and TARDBP. Interacts with HNF4A and PPARA. Interacts with PPARD (via domain NR LBD) and NR1I2 (via domain NR LBD) in a ligand-dependent manner. Interacts with PPARG, NR1I3 and VDR in a ligand-dependent manner. Requires FAD as cofactor. (6R)-5,10-methylene-5,6,7,8-tetrahydrofolate is required as a cofactor. Phosphorylation on Ser-265 by MAPK is important for the inhibition of CLOCK-BMAL1-mediated transcriptional activity. Phosphorylation by CSKNe requires interaction with PER1 or PER2. Phosphorylated in a circadian manner at Ser-553 and Ser-557 in the suprachiasmatic nucleus (SCN) and liver. Phosphorylation at Ser-557 by DYRK1A promotes subsequent phosphorylation at Ser-553 by GSK3-beta: the two-step phosphorylation at the neighboring Ser residues leads to its proteasomal degradation. In terms of processing, ubiquitinated by the SCF(FBXL3) and SCF(FBXL21) complexes, regulating the balance between degradation and stabilization. The SCF(FBXL3) complex is mainly nuclear and mediates ubiquitination and subsequent degradation of CRY2. In contrast, cytoplasmic SCF(FBXL21) complex-mediated ubiquitination leads to stabilize CRY2 and counteract the activity of the SCF(FBXL3) complex. The SCF(FBXL3) and SCF(FBXL21) complexes probably mediate ubiquitination at different Lys residues. The SCF(FBXL3) complex recognizes and binds CRY2 phosphorylated at Ser-553 and Ser-557. Ubiquitination may be inhibited by PER2. Deubiquitinated by USP7. In terms of tissue distribution, expressed in all tissues examined including heart, cerebellum, cerebral cortex, lung, liver, muscle, kidney and ovary. Highest levels in heart, liver and ovary. Highly expressed in the suprachiasmatic nucleus (SCN).

The protein localises to the cytoplasm. The protein resides in the nucleus. Its function is as follows. Transcriptional repressor which forms a core component of the circadian clock. The circadian clock, an internal time-keeping system, regulates various physiological processes through the generation of approximately 24 hour circadian rhythms in gene expression, which are translated into rhythms in metabolism and behavior. It is derived from the Latin roots 'circa' (about) and 'diem' (day) and acts as an important regulator of a wide array of physiological functions including metabolism, sleep, body temperature, blood pressure, endocrine, immune, cardiovascular, and renal function. Consists of two major components: the central clock, residing in the suprachiasmatic nucleus (SCN) of the brain, and the peripheral clocks that are present in nearly every tissue and organ system. Both the central and peripheral clocks can be reset by environmental cues, also known as Zeitgebers (German for 'timegivers'). The predominant Zeitgeber for the central clock is light, which is sensed by retina and signals directly to the SCN. The central clock entrains the peripheral clocks through neuronal and hormonal signals, body temperature and feeding-related cues, aligning all clocks with the external light/dark cycle. Circadian rhythms allow an organism to achieve temporal homeostasis with its environment at the molecular level by regulating gene expression to create a peak of protein expression once every 24 hours to control when a particular physiological process is most active with respect to the solar day. Transcription and translation of core clock components (CLOCK, NPAS2, BMAL1, BMAL2, PER1, PER2, PER3, CRY1 and CRY2) plays a critical role in rhythm generation, whereas delays imposed by post-translational modifications (PTMs) are important for determining the period (tau) of the rhythms (tau refers to the period of a rhythm and is the length, in time, of one complete cycle). A diurnal rhythm is synchronized with the day/night cycle, while the ultradian and infradian rhythms have a period shorter and longer than 24 hours, respectively. Disruptions in the circadian rhythms contribute to the pathology of cardiovascular diseases, cancer, metabolic syndromes and aging. A transcription/translation feedback loop (TTFL) forms the core of the molecular circadian clock mechanism. Transcription factors, CLOCK or NPAS2 and BMAL1 or BMAL2, form the positive limb of the feedback loop, act in the form of a heterodimer and activate the transcription of core clock genes and clock-controlled genes (involved in key metabolic processes), harboring E-box elements (5'-CACGTG-3') within their promoters. The core clock genes: PER1/2/3 and CRY1/2 which are transcriptional repressors form the negative limb of the feedback loop and interact with the CLOCK|NPAS2-BMAL1|BMAL2 heterodimer inhibiting its activity and thereby negatively regulating their own expression. This heterodimer also activates nuclear receptors NR1D1/2 and RORA/B/G, which form a second feedback loop and which activate and repress BMAL1 transcription, respectively. CRY1 and CRY2 have redundant functions but also differential and selective contributions at least in defining the pace of the SCN circadian clock and its circadian transcriptional outputs. Less potent transcriptional repressor in cerebellum and liver than CRY1, though less effective in lengthening the period of the SCN oscillator. Seems to play a critical role in tuning SCN circadian period by opposing the action of CRY1. With CRY1, dispensable for circadian rhythm generation but necessary for the development of intercellular networks for rhythm synchrony. May mediate circadian regulation of cAMP signaling and gluconeogenesis by blocking glucagon-mediated increases in intracellular cAMP concentrations and in CREB1 phosphorylation. Besides its role in the maintenance of the circadian clock, is also involved in the regulation of other processes. Plays a key role in glucose and lipid metabolism modulation, in part, through the transcriptional regulation of genes involved in these pathways, such as LEP or ACSL4. Represses glucocorticoid receptor NR3C1/GR-induced transcriptional activity by binding to glucocorticoid response elements (GREs). Represses the CLOCK-BMAL1 induced transcription of BHLHE40/DEC1 and NAMPT. Represses PPARD and its target genes in the skeletal muscle and limits exercise capacity. Represses the transcriptional activity of NR1I2. This is Cryptochrome-2 (Cry2) from Rattus norvegicus (Rat).